We begin with the raw amino-acid sequence, 218 residues long: Probable carboxylesterase clz11 (218 aa).

The Involved in the stabilization of the negatively charged intermediate by the formation of the oxyanion hole motif lies at 7-9; the sequence is LVG. Serine 77 is an active-site residue.

This sequence belongs to the 'GDXG' lipolytic enzyme family.

The catalysed reaction is a carboxylic ester + H2O = an alcohol + a carboxylate + H(+). It functions in the pathway secondary metabolite biosynthesis. Functionally, probable carboxylesterase; part of the gene cluster that mediates the biosynthesis of squalestatin S1 (SQS1, also known as zaragozic acid A), a heavily oxidized fungal polyketide that offers potent cholesterol lowering activity by targeting squalene synthase (SS). SQS1 is composed of a 2,8-dioxobicyclic[3.2.1]octane-3,4,5-tricarboxyclic acid core that is connected to two lipophilic polyketide arms. These initial steps feature the priming of an unusual benzoic acid starter unit onto the highly reducing polyketide synthase clz14, followed by oxaloacetate extension and product release to generate a tricarboxylic acid containing product. The phenylalanine ammonia lyase (PAL) clz10 and the acyl-CoA ligase clz12 are involved in transforming phenylalanine into benzoyl-CoA. The citrate synthase-like protein clz17 is involved in connecting the C-alpha-carbons of the hexaketide chain and oxaloacetate to afford the tricarboxylic acid unit. The potential hydrolytic enzymes, clz11 and clz13, are in close proximity to pks2 and may participate in product release. On the other side, the tetraketide arm is synthesized by a the squalestatin tetraketide synthase clz2 and enzymatically esterified to the core in the last biosynthetic step, by the acetyltransferase clz6. The biosynthesis of the tetraketide must involve 3 rounds of chain extension. After the first and second rounds methyl-transfer occurs, and in all rounds of extension the ketoreductase and dehydratase are active. The enoyl reductase and C-MeT of clz2 are not active in the final round of extension. The acetyltransferase clz6 appears to have a broad substrate selectivity for its acyl CoA substrate, allowing the in vitro synthesis of novel squalestatins. The biosynthesis of SQS1 requires several oxidative steps likely performed by oxidoreductases clz3, clz15 and clz16. Finally, in support of the identification of the cluster as being responsible for SQS1 production, the cluster contains a gene encoding a putative squalene synthase (SS) clz20, suggesting a likely mechanism for self-resistance. The sequence is that of Probable carboxylesterase clz11 from Cochliobolus lunatus (Filamentous fungus).